Consider the following 110-residue polypeptide: Ribonuclease P protein component 1 (110 aa).

The protein belongs to the eukaryotic/archaeal RNase P protein component 1 family. In terms of assembly, consists of a catalytic RNA component and at least 4-5 protein subunits.

It is found in the cytoplasm. It catalyses the reaction Endonucleolytic cleavage of RNA, removing 5'-extranucleotides from tRNA precursor.. In terms of biological role, part of ribonuclease P, a protein complex that generates mature tRNA molecules by cleaving their 5'-ends. The chain is Ribonuclease P protein component 1 from Methanosarcina barkeri (strain Fusaro / DSM 804).